The sequence spans 425 residues: Glutamyl-tRNA reductase (425 aa).

Residues 49 to 52 (TCNR), S109, 114 to 116 (EGQ), and Q120 each bind substrate. Catalysis depends on C50, which acts as the Nucleophile. 189–194 (GAGETG) is a binding site for NADP(+).

The protein belongs to the glutamyl-tRNA reductase family. In terms of assembly, homodimer.

It catalyses the reaction (S)-4-amino-5-oxopentanoate + tRNA(Glu) + NADP(+) = L-glutamyl-tRNA(Glu) + NADPH + H(+). It participates in porphyrin-containing compound metabolism; protoporphyrin-IX biosynthesis; 5-aminolevulinate from L-glutamyl-tRNA(Glu): step 1/2. The protein operates within porphyrin-containing compound metabolism; chlorophyll biosynthesis. Its function is as follows. Catalyzes the NADPH-dependent reduction of glutamyl-tRNA(Glu) to glutamate 1-semialdehyde (GSA). The protein is Glutamyl-tRNA reductase of Chlorobium luteolum (strain DSM 273 / BCRC 81028 / 2530) (Pelodictyon luteolum).